We begin with the raw amino-acid sequence, 100 residues long: Urease subunit gamma (100 aa).

Belongs to the urease gamma subunit family. Heterotrimer of UreA (gamma), UreB (beta) and UreC (alpha) subunits. Three heterotrimers associate to form the active enzyme.

The protein resides in the cytoplasm. It carries out the reaction urea + 2 H2O + H(+) = hydrogencarbonate + 2 NH4(+). It participates in nitrogen metabolism; urea degradation; CO(2) and NH(3) from urea (urease route): step 1/1. The polypeptide is Urease subunit gamma (Teredinibacter turnerae (strain ATCC 39867 / T7901)).